A 376-amino-acid chain; its full sequence is Methionine import ATP-binding protein MetN 2 (376 aa).

Positions 1–25 are disordered; sequence MTATAQRQRPIDTTGAGQRAQQAEL. Residues 34–273 form the ABC transporter domain; that stretch reads VRFINLGKTY…PQHEVSKTLL (240 aa). Residue 70–77 participates in ATP binding; sequence GRSGAGKS.

This sequence belongs to the ABC transporter superfamily. Methionine importer (TC 3.A.1.24) family. As to quaternary structure, the complex is composed of two ATP-binding proteins (MetN), two transmembrane proteins (MetI) and a solute-binding protein (MetQ).

It localises to the cell inner membrane. It carries out the reaction L-methionine(out) + ATP + H2O = L-methionine(in) + ADP + phosphate + H(+). The enzyme catalyses D-methionine(out) + ATP + H2O = D-methionine(in) + ADP + phosphate + H(+). Its function is as follows. Part of the ABC transporter complex MetNIQ involved in methionine import. Responsible for energy coupling to the transport system. The polypeptide is Methionine import ATP-binding protein MetN 2 (Pseudomonas syringae pv. syringae (strain B728a)).